Here is a 74-residue protein sequence, read N- to C-terminus: ATP synthase subunit c (74 aa).

2 consecutive transmembrane segments (helical) span residues 5 to 25 (LAHI…IGVG) and 49 to 69 (LFIG…VALL).

It belongs to the ATPase C chain family. As to quaternary structure, F-type ATPases have 2 components, F(1) - the catalytic core - and F(0) - the membrane proton channel. F(1) has five subunits: alpha(3), beta(3), gamma(1), delta(1), epsilon(1). F(0) has three main subunits: a(1), b(2) and c(10-14). The alpha and beta chains form an alternating ring which encloses part of the gamma chain. F(1) is attached to F(0) by a central stalk formed by the gamma and epsilon chains, while a peripheral stalk is formed by the delta and b chains.

The protein resides in the cell inner membrane. Its function is as follows. F(1)F(0) ATP synthase produces ATP from ADP in the presence of a proton or sodium gradient. F-type ATPases consist of two structural domains, F(1) containing the extramembraneous catalytic core and F(0) containing the membrane proton channel, linked together by a central stalk and a peripheral stalk. During catalysis, ATP synthesis in the catalytic domain of F(1) is coupled via a rotary mechanism of the central stalk subunits to proton translocation. In terms of biological role, key component of the F(0) channel; it plays a direct role in translocation across the membrane. A homomeric c-ring of between 10-14 subunits forms the central stalk rotor element with the F(1) delta and epsilon subunits. The chain is ATP synthase subunit c from Ruegeria pomeroyi (strain ATCC 700808 / DSM 15171 / DSS-3) (Silicibacter pomeroyi).